The sequence spans 259 residues: Large ribosomal subunit protein eL8 (259 aa).

Residues 1–24 (MAPKSKKVAPSPFAQPKAAKTTKN) form a disordered region. Phosphoserine occurs at positions 11 and 33.

The protein belongs to the eukaryotic ribosomal protein eL8 family. As to quaternary structure, component of the large ribosomal subunit (LSU). Mature yeast ribosomes consist of a small (40S) and a large (60S) subunit. The 40S small subunit contains 1 molecule of ribosomal RNA (18S rRNA) and at least 33 different proteins. The large 60S subunit contains 3 rRNA molecules (25S, 5.8S and 5S rRNA) and at least 46 different proteins.

It localises to the cytoplasm. In terms of biological role, component of the ribosome, a large ribonucleoprotein complex responsible for the synthesis of proteins in the cell. The small ribosomal subunit (SSU) binds messenger RNAs (mRNAs) and translates the encoded message by selecting cognate aminoacyl-transfer RNA (tRNA) molecules. The large subunit (LSU) contains the ribosomal catalytic site termed the peptidyl transferase center (PTC), which catalyzes the formation of peptide bonds, thereby polymerizing the amino acids delivered by tRNAs into a polypeptide chain. The nascent polypeptides leave the ribosome through a tunnel in the LSU and interact with protein factors that function in enzymatic processing, targeting, and the membrane insertion of nascent chains at the exit of the ribosomal tunnel. The chain is Large ribosomal subunit protein eL8 (rpl8) from Schizosaccharomyces pombe (strain 972 / ATCC 24843) (Fission yeast).